The primary structure comprises 411 residues: Citrate synthase (411 aa).

Catalysis depends on residues histidine 304 and aspartate 363.

The protein belongs to the citrate synthase family.

It catalyses the reaction oxaloacetate + acetyl-CoA + H2O = citrate + CoA + H(+). It functions in the pathway carbohydrate metabolism; tricarboxylic acid cycle; isocitrate from oxaloacetate: step 1/2. This Rickettsia conorii subsp. caspia (strain A-167) (Astrakhan rickettsia) protein is Citrate synthase (gltA).